We begin with the raw amino-acid sequence, 534 residues long: Replication factor C large subunit (534 aa).

45 to 52 is an ATP binding site; the sequence is GPPGIGKT. The segment covering 444 to 463 has biased composition (basic and acidic residues); that stretch reads KNKKEIKVKTKKDTVEDSSK. The segment at 444 to 534 is disordered; it reads KNKKEIKVKT…KSRQTTLFDF (91 aa). Over residues 488-510 the composition is skewed to low complexity; the sequence is SSNSTTKNKTESPKNSSKTSSKT. Basic residues predominate over residues 517 to 527; sequence TSKKNNKKKSR.

It belongs to the activator 1 small subunits family. RfcL subfamily. Heteromultimer composed of small subunits (RfcS) and large subunits (RfcL).

In terms of biological role, part of the RFC clamp loader complex which loads the PCNA sliding clamp onto DNA. This is Replication factor C large subunit from Methanosphaera stadtmanae (strain ATCC 43021 / DSM 3091 / JCM 11832 / MCB-3).